Here is a 568-residue protein sequence, read N- to C-terminus: Urease subunit alpha (568 aa).

In terms of domain architecture, Urease spans 131 to 568 (GGIDTHIHFI…LPMAQRYFLF (438 aa)). 3 residues coordinate Ni(2+): His-136, His-138, and Lys-219. The residue at position 219 (Lys-219) is an N6-carboxylysine. A substrate-binding site is contributed by His-221. Ni(2+) contacts are provided by His-248 and His-274. His-322 (proton donor) is an active-site residue. Asp-362 lines the Ni(2+) pocket.

This sequence belongs to the metallo-dependent hydrolases superfamily. Urease alpha subunit family. In terms of assembly, heterotrimer of UreA (gamma), UreB (beta) and UreC (alpha) subunits. Three heterotrimers associate to form the active enzyme. Requires Ni cation as cofactor. Carboxylation allows a single lysine to coordinate two nickel ions.

Its subcellular location is the cytoplasm. It carries out the reaction urea + 2 H2O + H(+) = hydrogencarbonate + 2 NH4(+). It functions in the pathway nitrogen metabolism; urea degradation; CO(2) and NH(3) from urea (urease route): step 1/1. In Nostoc sp. (strain PCC 7120 / SAG 25.82 / UTEX 2576), this protein is Urease subunit alpha.